A 1074-amino-acid chain; its full sequence is Phospholipase D1 (1074 aa).

One can recognise a PX domain in the interval 81 to 212 (VKAQVLEVER…TEFLDVSQLS (132 aa)). Residues 219-328 (PKGLEGMIMK…WGGAIEEFIQ (110 aa)) form the PH domain. S-palmitoyl cysteine attachment occurs at residues Cys240 and Cys241. The 28-residue stretch at 459 to 486 (YLWAHHEKLVIIDQSVAFVGGIDLAYGR) folds into the PLD phosphodiesterase 1 domain. The interval 463-928 (HHEKLVIIDQ…MLGKRDSEMA (466 aa)) is catalytic. 3 positions are modified to phosphoserine: Ser499, Ser561, and Ser629. The PLD phosphodiesterase 2 domain maps to 891–918 (ELIYVHSKLLIADDNTVIIGSANINDRS).

It belongs to the phospholipase D family. In terms of assembly, interacts with PIP5K1B. Phosphorylated on serine and threonine residues. Post-translationally, it is uncertain whether palmitoylation is on Cys-240 and/or Cys-241. Palmitoylation is required prior to phosphorylation.

Its subcellular location is the cytoplasm. It localises to the perinuclear region. The protein localises to the endoplasmic reticulum membrane. The protein resides in the golgi apparatus membrane. It is found in the late endosome membrane. It carries out the reaction a 1,2-diacyl-sn-glycero-3-phosphocholine + H2O = a 1,2-diacyl-sn-glycero-3-phosphate + choline + H(+). It catalyses the reaction ethanol + a 1,2-diacyl-sn-glycero-3-phosphocholine = 1,2-diacyl-sn-glycero-3-phosphoethanol + choline. The catalysed reaction is 1,2-dihexadecanoyl-sn-glycero-3-phosphocholine + H2O = 1,2-dihexadecanoyl-sn-glycero-3-phosphate + choline + H(+). Stimulated by phosphatidylinositol 4,5-bisphosphate and phosphatidylinositol 3,4,5-trisphosphate, activated by the phosphokinase C-alpha, by the ADP-ribosylation factor-1 (ARF-1), and to a lesser extent by GTP-binding proteins: RHO A, RAC-1 and CDC42. Inhibited by oleate. Function as phospholipase selective for phosphatidylcholine. Implicated as a critical step in numerous cellular pathways, including signal transduction, membrane trafficking, and the regulation of mitosis. May be involved in the regulation of perinuclear intravesicular membrane traffic. This Rattus norvegicus (Rat) protein is Phospholipase D1.